A 394-amino-acid chain; its full sequence is Queuine tRNA-ribosyltransferase (394 aa).

The Proton acceptor role is filled by D95. Substrate is bound by residues 95-99 (DSGGF), D149, Q190, and G217. Positions 248–254 (GVGTPID) are RNA binding. The Nucleophile role is filled by D267. An RNA binding; important for wobble base 34 recognition region spans residues 272-276 (TRNAR). Residues C305, C307, C310, and H337 each contribute to the Zn(2+) site. The disordered stretch occupies residues 375 to 394 (NDANETVGATESTESTESTE).

This sequence belongs to the queuine tRNA-ribosyltransferase family. Homodimer. Within each dimer, one monomer is responsible for RNA recognition and catalysis, while the other monomer binds to the replacement base PreQ1. It depends on Zn(2+) as a cofactor.

The enzyme catalyses 7-aminomethyl-7-carbaguanine + guanosine(34) in tRNA = 7-aminomethyl-7-carbaguanosine(34) in tRNA + guanine. Its pathway is tRNA modification; tRNA-queuosine biosynthesis. Its function is as follows. Catalyzes the base-exchange of a guanine (G) residue with the queuine precursor 7-aminomethyl-7-deazaguanine (PreQ1) at position 34 (anticodon wobble position) in tRNAs with GU(N) anticodons (tRNA-Asp, -Asn, -His and -Tyr). Catalysis occurs through a double-displacement mechanism. The nucleophile active site attacks the C1' of nucleotide 34 to detach the guanine base from the RNA, forming a covalent enzyme-RNA intermediate. The proton acceptor active site deprotonates the incoming PreQ1, allowing a nucleophilic attack on the C1' of the ribose to form the product. After dissociation, two additional enzymatic reactions on the tRNA convert PreQ1 to queuine (Q), resulting in the hypermodified nucleoside queuosine (7-(((4,5-cis-dihydroxy-2-cyclopenten-1-yl)amino)methyl)-7-deazaguanosine). In Sorangium cellulosum (strain So ce56) (Polyangium cellulosum (strain So ce56)), this protein is Queuine tRNA-ribosyltransferase.